We begin with the raw amino-acid sequence, 276 residues long: Large ribosomal subunit protein uL2 (276 aa).

Positions 222-276 are disordered; the sequence is GVAMNPIDHPLGGGEGRSSGGRHPVSPWGMPTKGYKTRDRKKASSKLIIKRRGQK. The span at 259–276 shows a compositional bias: basic residues; the sequence is RDRKKASSKLIIKRRGQK.

The protein belongs to the universal ribosomal protein uL2 family. In terms of assembly, part of the 50S ribosomal subunit. Forms a bridge to the 30S subunit in the 70S ribosome.

Functionally, one of the primary rRNA binding proteins. Required for association of the 30S and 50S subunits to form the 70S ribosome, for tRNA binding and peptide bond formation. It has been suggested to have peptidyltransferase activity; this is somewhat controversial. Makes several contacts with the 16S rRNA in the 70S ribosome. The polypeptide is Large ribosomal subunit protein uL2 (Nitratidesulfovibrio vulgaris (strain ATCC 29579 / DSM 644 / CCUG 34227 / NCIMB 8303 / VKM B-1760 / Hildenborough) (Desulfovibrio vulgaris)).